A 3241-amino-acid polypeptide reads, in one-letter code: PHD finger protein rhinoceros (3241 aa).

Positions 1–16 are enriched in basic residues; the sequence is MSQRGKRGNQQHHQSH. The segment at 1–126 is disordered; that stretch reads MSQRGKRGNQ…GASSSSSWQA (126 aa). Composition is skewed to low complexity over residues 42–55 and 90–126; these read PPNG…AEVT and RAAA…SWQA. The segment at 312–362 adopts a PHD-type 1 zinc-finger fold; the sequence is NVICDVCRSPDSEEANEMVFCDNCNICVHQACYGITAIPSGQWLCRTCSMG. The C2HC pre-PHD-type zinc-finger motif lies at 364–398; sequence KPDCVLCPNKGGAMKSNKSGKHWAHVSCALWIPEV. The PHD-type 2 zinc-finger motif lies at 422–481; it reads LICVLCRKRVGSCIQCSVKPCKTAYHVTCAFQHGLEMRAIIEEGNAEDGVKLRSYCQKHS. 6 disordered regions span residues 482 to 501, 508 to 554, 737 to 1266, 1279 to 1483, 1500 to 1613, and 1632 to 1746; these read MSKG…ASVA, NRYG…ARAQ, SGKQ…VATP, PQRQ…STKV, PKTN…SETR, and NLGA…QHLL. A compositionally biased stretch (basic and acidic residues) spans 540-554; it reads KTELTSEERNQARAQ. Positions 762–777 are enriched in polar residues; the sequence is KKLNNGILSSRTSSPE. The span at 807-874 shows a compositional bias: low complexity; it reads KSSAAAATST…SGSSSAGSGV (68 aa). The span at 931-943 shows a compositional bias: basic and acidic residues; that stretch reads ERCRNRQEPERGA. Polar residues predominate over residues 949–965; the sequence is QSKSVPNRSQASRSKPT. The segment covering 995–1007 has biased composition (acidic residues); sequence DADESVSSDESEE. The segment covering 1019-1031 has biased composition (low complexity); that stretch reads STTTSGLATTGSA. Over residues 1060–1075 the composition is skewed to polar residues; that stretch reads TVESNVSDSQNQQTIR. The span at 1087–1104 shows a compositional bias: low complexity; the sequence is TAATTSSTSQAASSTSKA. Composition is skewed to polar residues over residues 1117–1126 and 1151–1163; these read IGNSTKTKPN and NMRS…TLQP. Basic and acidic residues predominate over residues 1184-1211; that stretch reads KVKDSSSRVSNEADKSSLEKVRPKEHLQ. Residues 1313–1327 show a composition bias toward polar residues; the sequence is VTSATISGSGSSVPA. Threonine 1346 carries the phosphothreonine modification. Serine 1352 is subject to Phosphoserine. Threonine 1364 carries the phosphothreonine modification. Residues 1382-1426 are compositionally biased toward low complexity; that stretch reads SSSSSGDSESSSSSSSSGSSSSSGGSDSDSESQASNSENPSSREP. Threonine 1456 is modified (phosphothreonine). Positions 1463 to 1483 are enriched in polar residues; that stretch reads NVLNIPSTRSRQNSTTKSTKV. Positions 1541–1558 are enriched in basic and acidic residues; sequence SPEKTVSRCKSRAEESPK. Residues 1576–1594 are compositionally biased toward polar residues; sequence KGTSSLDKLLNKKQQQMNH. Over residues 1599–1608 the composition is skewed to pro residues; that stretch reads TPPPISPTPP. The segment covering 1664–1675 has biased composition (polar residues); the sequence is TAPTRTQLSASA. Pro residues predominate over residues 1688 to 1699; the sequence is PAAPLPASPTPT. Basic residues predominate over residues 1717–1731; sequence RRMRWRSRRRRRRRS. Coiled-coil stretches lie at residues 1741-1770 and 1893-1925; these read HTQH…ASKY and SEED…KEAV. Disordered regions lie at residues 2037-2061, 2124-2148, 2203-2227, 2346-2454, 2598-2629, 2667-2691, 2768-2811, 2832-2911, 2964-3015, 3042-3169, and 3184-3241; these read LEKS…GQPA, AERR…PVVT, NNTN…TPNN, TPPV…GGVT, ATGT…PAPN, SEEV…ARSQ, NDDS…NSSS, GAGA…SVDE, NKRG…TTTM, KAET…EAAM, and VNVG…CEVR. The span at 2359–2381 shows a compositional bias: polar residues; that stretch reads KRTSVSGSNLSKKQTHKSPQLPQ. Residues 2392-2402 are compositionally biased toward pro residues; sequence PLQPPTPPAPV. The span at 2430–2439 shows a compositional bias: gly residues; that stretch reads GSGGSGAPGR. Polar residues-rich tracts occupy residues 2598-2611 and 2673-2689; these read ATGT…QHSG and DSDS…SDAR. The segment covering 2855–2865 has biased composition (polar residues); that stretch reads NNDNNGKTGAA. Over residues 2876–2887 the composition is skewed to basic and acidic residues; it reads KTLESSEDDHQA. A phosphoserine mark is found at serine 2880 and serine 2881. Residues 2899–2911 are compositionally biased toward polar residues; it reads ANETPSGVSSVDE. Positions 2964–2974 are enriched in basic and acidic residues; sequence NKRGVVVKDGE. A compositionally biased stretch (basic residues) spans 2984–3002; it reads KRPKSSKPKKEKKEKKRQK. Over residues 3003–3015 the composition is skewed to low complexity; it reads QQQLILSSSTTTM. 2 positions are modified to phosphoserine: serine 3104 and serine 3110. Composition is skewed to polar residues over residues 3115-3130 and 3184-3197; these read LLNS…NTSP and VNVG…NSLP. The span at 3198 to 3218 shows a compositional bias: low complexity; sequence SASGTGSASSNSCNSNSINNN. Over residues 3219–3230 the composition is skewed to gly residues; the sequence is GSGGGRASGEGG.

It belongs to the JADE family.

It is found in the nucleus. May function as a negative regulator of the EGFR/Ras/MAPK signaling pathway during eye development. The protein is PHD finger protein rhinoceros (rno) of Drosophila melanogaster (Fruit fly).